We begin with the raw amino-acid sequence, 359 residues long: 3-dehydroquinate synthase (359 aa).

NAD(+)-binding positions include 71-76, 105-109, 129-130, Lys142, and Lys151; these read DGEAYK, GVVGD, and TT. Zn(2+) contacts are provided by Glu184, His247, and His264.

It belongs to the sugar phosphate cyclases superfamily. Dehydroquinate synthase family. Co(2+) serves as cofactor. Zn(2+) is required as a cofactor. Requires NAD(+) as cofactor.

Its subcellular location is the cytoplasm. The catalysed reaction is 7-phospho-2-dehydro-3-deoxy-D-arabino-heptonate = 3-dehydroquinate + phosphate. It functions in the pathway metabolic intermediate biosynthesis; chorismate biosynthesis; chorismate from D-erythrose 4-phosphate and phosphoenolpyruvate: step 2/7. In terms of biological role, catalyzes the conversion of 3-deoxy-D-arabino-heptulosonate 7-phosphate (DAHP) to dehydroquinate (DHQ). The chain is 3-dehydroquinate synthase from Burkholderia cenocepacia (strain HI2424).